A 244-amino-acid polypeptide reads, in one-letter code: MPTLFISDLHLEIEKPDLTRFFFNFLDKVAPNAEALYILGDFFEVWVGDDEQSPLQVEVAQRLHKLAEAGTHIHLMHGNRDFLIGETYAKQCGATLLAEPHALDLYGVPSLLMHGDSLCTLDAAYQKARATFRNPAFQSQFLSRPLDQRQLTARQMRQISMAKNQGKAEVIMDVAPDEVINTFNTYGIELLIHGHTHRPDTHRYNLPQGEVKRIVLGDWGEETWYGRADADGFQLLNLKAEDIA.

5 residues coordinate Mn(2+): aspartate 8, histidine 10, aspartate 41, asparagine 79, and histidine 114. 79 to 80 (NR) serves as a coordination point for substrate. 5 residues coordinate substrate: aspartate 122, serine 160, asparagine 164, lysine 167, and histidine 195. Histidine 195 and histidine 197 together coordinate Mn(2+).

This sequence belongs to the LpxH family. Mn(2+) serves as cofactor.

The protein resides in the cell inner membrane. It carries out the reaction UDP-2-N,3-O-bis[(3R)-3-hydroxytetradecanoyl]-alpha-D-glucosamine + H2O = 2-N,3-O-bis[(3R)-3-hydroxytetradecanoyl]-alpha-D-glucosaminyl 1-phosphate + UMP + 2 H(+). The protein operates within glycolipid biosynthesis; lipid IV(A) biosynthesis; lipid IV(A) from (3R)-3-hydroxytetradecanoyl-[acyl-carrier-protein] and UDP-N-acetyl-alpha-D-glucosamine: step 4/6. Hydrolyzes the pyrophosphate bond of UDP-2,3-diacylglucosamine to yield 2,3-diacylglucosamine 1-phosphate (lipid X) and UMP by catalyzing the attack of water at the alpha-P atom. Involved in the biosynthesis of lipid A, a phosphorylated glycolipid that anchors the lipopolysaccharide to the outer membrane of the cell. The polypeptide is UDP-2,3-diacylglucosamine hydrolase (Hahella chejuensis (strain KCTC 2396)).